The chain runs to 289 residues: Urease accessory protein UreD (289 aa).

This sequence belongs to the UreD family. In terms of assembly, ureD, UreF and UreG form a complex that acts as a GTP-hydrolysis-dependent molecular chaperone, activating the urease apoprotein by helping to assemble the nickel containing metallocenter of UreC. The UreE protein probably delivers the nickel.

It localises to the cytoplasm. In terms of biological role, required for maturation of urease via the functional incorporation of the urease nickel metallocenter. The sequence is that of Urease accessory protein UreD from Cupriavidus pinatubonensis (strain JMP 134 / LMG 1197) (Cupriavidus necator (strain JMP 134)).